A 340-amino-acid chain; its full sequence is MADTFVAKNWRDLIKPRRMEVDQDSATPTYGKFVAEPLERGFGTTLGNSLRRVLLSSLQGAAITTVKIEGVDHEFTTIPEVSEDVTDVVLNLKEVLLRMHTNETKTLRIEAEGPKEVKAGDIITDPDTEILNPGHHICTISEGGKLRMELTCRRGRGYTPANVNKVAGSPIGTIPIDSLFSPIRKVNYQVTNARVGQVTDFDKLSLEVWTDGSVSPQDAVAYAAKIIKEQLTVFVNFDETEEPVVAEAPKEEAKLNENLFRSVDELELSVRSANCLQQANIKSIGDLVQRTEAEMLKTKNFGRKSLKEIKEILAEMGLSLGMKLENWPPKQAPAPAQPKA.

Residues M1–D238 form an alpha N-terminal domain (alpha-NTD) region. The segment at A253 to A340 is alpha C-terminal domain (alpha-CTD).

The protein belongs to the RNA polymerase alpha chain family. In terms of assembly, homodimer. The RNAP catalytic core consists of 2 alpha, 1 beta, 1 beta' and 1 omega subunit. When a sigma factor is associated with the core the holoenzyme is formed, which can initiate transcription.

It catalyses the reaction RNA(n) + a ribonucleoside 5'-triphosphate = RNA(n+1) + diphosphate. DNA-dependent RNA polymerase catalyzes the transcription of DNA into RNA using the four ribonucleoside triphosphates as substrates. The protein is DNA-directed RNA polymerase subunit alpha of Myxococcus xanthus (strain DK1622).